A 291-amino-acid chain; its full sequence is ATP synthase subunit a (291 aa).

5 helical membrane passes run 47–67 (FTNLSLSMLLTLGLVLLLVFV), 140–160 (HFLITLALSFSIFIGITIVGF), 167–187 (FFSFLLPAGVPLPLAPFLVLL), 207–227 (MMAGHSSVKILSGFAWTMLFL), and 230–250 (IFYFLGDLGPLFIVLALTGLE).

Belongs to the ATPase A chain family. F-type ATPases have 2 components, CF(1) - the catalytic core - and CF(0) - the membrane proton channel. CF(1) has five subunits: alpha(3), beta(3), gamma(1), delta(1), epsilon(1). CF(0) has three main subunits: a, b and c.

The protein localises to the mitochondrion inner membrane. Mitochondrial membrane ATP synthase (F(1)F(0) ATP synthase or Complex V) produces ATP from ADP in the presence of a proton gradient across the membrane which is generated by electron transport complexes of the respiratory chain. F-type ATPases consist of two structural domains, F(1) - containing the extramembraneous catalytic core and F(0) - containing the membrane proton channel, linked together by a central stalk and a peripheral stalk. During catalysis, ATP synthesis in the catalytic domain of F(1) is coupled via a rotary mechanism of the central stalk subunits to proton translocation. Key component of the proton channel; it may play a direct role in the translocation of protons across the membrane. This chain is ATP synthase subunit a (ATP6), found in Zea mays (Maize).